The sequence spans 323 residues: Transmembrane protein 171 (323 aa).

A run of 4 helical transmembrane segments spans residues 22–42 (IFFL…ISIF), 57–77 (MVLK…VILA), 112–132 (LIFG…GIWV), and 159–179 (FLSL…FFVV). Positions 251–268 (YSSLFNLSRTPTPENQGA) are enriched in polar residues. Positions 251 to 323 (YSSLFNLSRT…LGAPSESSPP (73 aa)) are disordered. The span at 281 to 290 (SGPGSSSESS) shows a compositional bias: low complexity.

It localises to the membrane. This is Transmembrane protein 171 (Tmem171) from Rattus norvegicus (Rat).